The primary structure comprises 203 residues: Small ribosomal subunit protein uS4c (203 aa).

The interval Thr-17 to Asp-39 is disordered. The 73-residue stretch at Met-92–Pro-164 folds into the S4 RNA-binding domain.

This sequence belongs to the universal ribosomal protein uS4 family. Part of the 30S ribosomal subunit. Contacts protein S5. The interaction surface between S4 and S5 is involved in control of translational fidelity.

It is found in the plastid. Its subcellular location is the chloroplast. Its function is as follows. One of the primary rRNA binding proteins, it binds directly to 16S rRNA where it nucleates assembly of the body of the 30S subunit. With S5 and S12 plays an important role in translational accuracy. The sequence is that of Small ribosomal subunit protein uS4c (rps4) from Phaeodactylum tricornutum (strain CCAP 1055/1).